The sequence spans 472 residues: Ulvan lyase (472 aa).

Positions methionine 1–serine 21 are cleaved as a signal peptide. Positions 46 and 109 each coordinate substrate. Residue histidine 110 is the Proton donor of the active site. Substrate-binding residues include lysine 112 and histidine 130. Catalysis depends on tyrosine 175, which acts as the Proton acceptor. The substrate site is built by arginine 191, histidine 195, and tyrosine 233. Histidine 195 lines the Zn(2+) pocket. Zn(2+) contacts are provided by histidine 251, cysteine 253, and histidine 265. Histidine 265 contacts substrate.

The protein belongs to the polysaccharide lyase 25 family.

Ulvan lyase involved in ulvan degradation. Ulvan is the main polysaccharide component of the Ulvales (green seaweed) cell wall. It is composed of disaccharide building blocks comprising 3-sulfated rhamnose (Rha3S) linked to D-glucuronic acid (GlcA), L-iduronic acid (IduA), or D-xylose (Xyl). Ulvan lyase catalyzes the endolytic cleavage of the glycosidic bond between Rha3S and the uronic acids GlcA or IduA, producing oligosaccharides that have unsaturated 4-deoxy-L-threo-hex-4-enopyranosiduronic acid (deltaUA) at the non-reducing end. This results eventually in the degradation of the ulvan polysaccharide into deltaUA-Rha3S disaccharides and deltaUA-Rha3S-Xyl-Rha3S tetrasaccharides. This is Ulvan lyase from Nonlabens ulvanivorans (Persicivirga ulvanivorans).